The sequence spans 206 residues: Ribonuclease HII (206 aa).

The region spanning 18-206 (LRIAGVDEVG…PVHNILYQEK (189 aa)) is the RNase H type-2 domain. A divalent metal cation is bound by residues D24, E25, and D115.

It belongs to the RNase HII family. Mn(2+) is required as a cofactor. It depends on Mg(2+) as a cofactor.

The protein resides in the cytoplasm. The catalysed reaction is Endonucleolytic cleavage to 5'-phosphomonoester.. Functionally, endonuclease that specifically degrades the RNA of RNA-DNA hybrids. The sequence is that of Ribonuclease HII from Dinoroseobacter shibae (strain DSM 16493 / NCIMB 14021 / DFL 12).